Here is a 223-residue protein sequence, read N- to C-terminus: MIGEHKALVQRITNETKIQIAISLNGGHIELPESILDKNPTQENNIATQATTSQVIDIHTGVGFLDHMIHALAKHSGWSLIVECIGDLHIDDHHTTEDCGIALGEAFKQALGQVRGVKRFGCGFAPLDEALSRAVVDLSNRPYAVIDLGLKREKIGDLSCEMIPHFLESFIEAARLTVHIDCLRGFNDHHRSESAFKALAVAIREATAPNGTNDVPSTKGVLM.

Belongs to the imidazoleglycerol-phosphate dehydratase family.

The enzyme catalyses D-erythro-1-(imidazol-4-yl)glycerol 3-phosphate = 3-(imidazol-4-yl)-2-oxopropyl phosphate + H2O. It functions in the pathway amino-acid biosynthesis; L-histidine biosynthesis; L-histidine from 5-phospho-alpha-D-ribose 1-diphosphate: step 6/9. In Zygosaccharomyces bailii, this protein is Imidazoleglycerol-phosphate dehydratase (HIS3).